The following is a 387-amino-acid chain: Probable serine protease FE772_23060 (387 aa).

This sequence belongs to the peptidase S1 family.

Its function is as follows. Possibly a dedicated protease for substrate gasdermin bGSDM; cleaves the bGSDM precursor, releasing the pore-forming moiety, which integrates into the membrane and triggers cell death. Involved in defense against bacteriophages. When this probable 4 gene operon (bGSDM-FE772_23060-FE772_23065-FE772_23070) is inserted into E.coli it provides nearly 100-fold protection against phages T5 and T6 and about 8-fold against phage T4. The operon without bGSDM no longer protects against phage. The sequence is that of Probable serine protease FE772_23060 from Lysobacter enzymogenes.